The chain runs to 583 residues: Putative glutaminase 3 (583 aa).

Positions 1–29 are disordered; sequence MDNKEKEDEELSDELKDQPGPSEKPRTPT. 7 residues coordinate substrate: Ser216, Asn265, Glu311, Asn318, Tyr344, Tyr396, and Val414. ANK repeat units follow at residues 482 to 514, 515 to 548, and 549 to 581; these read DGQN…CKDY, DDRT…PCDR, and YDRT…LKGQ.

This sequence belongs to the glutaminase family.

The catalysed reaction is L-glutamine + H2O = L-glutamate + NH4(+). The chain is Putative glutaminase 3 (glna-3) from Caenorhabditis elegans.